A 323-amino-acid chain; its full sequence is Fructose-bisphosphate aldolase (323 aa).

Serine 50 provides a ligand contact to beta-D-fructose 1,6-bisphosphate. The active-site Proton donor is aspartate 83. Histidine 84 and histidine 178 together coordinate Zn(2+). The beta-D-fructose 1,6-bisphosphate site is built by histidine 178, glycine 179, and lysine 182. Histidine 210 is a binding site for Zn(2+). Glycine 211, serine 213, asparagine 253, aspartate 255, serine 256, arginine 259, and arginine 280 together coordinate beta-D-fructose 1,6-bisphosphate.

Belongs to the class II fructose-bisphosphate aldolase family. In terms of assembly, homodimer. It depends on Zn(2+) as a cofactor.

The enzyme catalyses beta-D-fructose 1,6-bisphosphate = D-glyceraldehyde 3-phosphate + dihydroxyacetone phosphate. Its pathway is carbohydrate degradation; glycolysis; D-glyceraldehyde 3-phosphate and glycerone phosphate from D-glucose: step 4/4. Its function is as follows. Plays a key role in glycolysis by catalyzing the cleavage of fructose 1,6-bisphosphate into dihydroxyacetone phosphate and glyceraldehyde 3-phosphate. Does not cleave D-tagatose-1,6-bisphosphate. This Giardia intestinalis (strain ATCC 50803 / WB clone C6) (Giardia lamblia) protein is Fructose-bisphosphate aldolase.